The following is a 104-amino-acid chain: Large ribosomal subunit protein uL24 (104 aa).

The protein belongs to the universal ribosomal protein uL24 family. Part of the 50S ribosomal subunit.

Its function is as follows. One of two assembly initiator proteins, it binds directly to the 5'-end of the 23S rRNA, where it nucleates assembly of the 50S subunit. In terms of biological role, one of the proteins that surrounds the polypeptide exit tunnel on the outside of the subunit. This is Large ribosomal subunit protein uL24 from Clostridium beijerinckii (strain ATCC 51743 / NCIMB 8052) (Clostridium acetobutylicum).